Reading from the N-terminus, the 946-residue chain is Aminopeptidase N (946 aa).

Positions 1-15 (MRLLICLTLLGLVCG) are cleaved as a signal peptide. Asn60 carries N-linked (GlcNAc...) asparagine glycosylation. 308 to 312 (GAMEN) contributes to the substrate binding site. Zn(2+) is bound at residue His344. The Proton acceptor role is filled by Glu345. The Zn(2+) site is built by His348 and Glu367. N-linked (GlcNAc...) asparagine glycosylation is found at Asn550 and Asn605. Cystine bridges form between Cys715–Cys722 and Cys751–Cys787.

Belongs to the peptidase M1 family. Requires Zn(2+) as cofactor.

The protein localises to the cell membrane. The catalysed reaction is Release of an N-terminal amino acid, Xaa-|-Yaa- from a peptide, amide or arylamide. Xaa is preferably Ala, but may be most amino acids including Pro (slow action). When a terminal hydrophobic residue is followed by a prolyl residue, the two may be released as an intact Xaa-Pro dipeptide.. The protein is Aminopeptidase N (APN1) of Plutella xylostella (Diamondback moth).